Consider the following 3507-residue polypeptide: MGRRSQWIWAMRCQMLVPVLSLHIGLARALGCGCIASKIECLIRCNAPFPLLDAVGSVASQELQSLTGTVGVTSGAAAYPRWNLARARAPPHLPGTQDPLRRVRDPTPIVASSPGRRRGSWSGGYGQEASEPGVVGLCCAVLPIHPSLALAGVGGPDLRRFQEGPQRPSDHGAAEKHMETFIPIDLTTENQEMDKEETKTKPRLLRYEEKKYEDVKPLETQPAEIAEKETLEYKTVRTFSESLKSEKTEEPKDDDVIRNIIRLREKLGWQTILPQHSLKYGSSKIAIQKITLKKPLEDDGEFVYCLPRKSPKSLYNPYDLQVVSAHTAKHCKEFWVITASFISKLDSSRTYSLDEFCEEQLQQATQALKQLEDIRNKAISEMKSTFLKVAEKNEIKEYFESKLSEDDTTHFKLPKYRRLLETFFKFVMLVDYIFQELIRQLMNTAVTLLLELFNGSAGMPFSVEKKNENLIRTFKDNSFPTGKTTNDCEELVDNSKLHAISVQKSEVKTDTDINEILNSVEVGKDLRKTYAPIFEVNLCLRIPAESDSSENSKENFHESDQCPEECVMFEDEMSENKDNCVKKHSSEELLPKAKKSKEISYNLEDIISATITPLCQDPQLSIFIDLVSIMDLPNKTGSIIHYKEQTRWPDCHILFETDPAYQNIIVNLLTIIGNSMGLVNAYSHKFIKYCTMTEKAKIMSMKISSMGELTSKEFEAILNRFRNYFRHIVNMAIEKRIGIFNVVVESSLQQLECDPTEIEEFLEHFIFLNAISSKISKLEKEFLTMSQLYSVAKHHQIHISEEQIAIFQVLLLKFSQLKSSMKLSKINKDTAITKFRDNLEACISGLHVDVGNLKAKIRTPLLLCAGTQVSTAMEMIQTLSGEAASLTNKAKAYSHYQDCFSDSQSHMHSVNVEEITQIVLSEISDIEGDLTLRKKLWEAQEEWKRASWEWRNSSLQSIDVESVQRNVSKLMHIISVLEKEIYSIFIIPSIDDISAQLEESQVILATIKGSPHIGPIKSQIMFYNDCVKSFVSSYSREKLEKVHAGLMCHLEEVADLVVLDTSNSRTKAILGALLILYVHCRDIVINLLLKNIFNAEDFEWTRHLQYKWNEKQKLCYVSQGNASFTYGYEYLGCTSRLVITPLTDRCWLTLMEALHLNLGGCPAGPAGTGKTETVKDLAKCALFAFKCNTALIKLPNSLIVLTCFGLEKTVLVMNTVMSFRFVLEGKEIRINMSCAVFITMNPRYGGGVELPDNLKSLFRPVAMMVPHYQMIAEIILFSFGFKSANSLSGKLTNLYELARKQLSQQDHYNFGLRSLKIVLIMAGTKKREFKCDTSDSLSEADETLIVIEAIREASLPKCPPEDVPLFENIIGDIFPEVTVLKVNQLALEKVIYTATQQLGLQNWSSQKEKIIQFYNQLQVCVGVMLVGPTGGGKTTVRRILEKALTLLPIADFLSVAERKSASKISERKGKVDICVLNPKCVTLSELYGQLDPNTMEWTDGLLSATIRSYVYFNTPKNTKKDIDLRLKSRISDLSNVFKLDSSDTTETDDNIFEEIEKVVKIPENHNFDWQWIILDGPVDTFWVENLNSVLDDTRTLCLANSERIALTNKIRVIFEVDNLSQASPATVSRCAMVYMDPVDLGWEPYVKSWLLKTSKIISQSGVDCLEFMIKNSVTDGLQFIRNRQKFQPYPMEDITVVITLCRILDAFFDFMGKNGGFEQSDDLNDTSSKEANSQRESVTFKDIEKRDENTWYPEKNPDKLTKIIQKLFVFAFTWAFGGALNREDEHRENIPFCPSLEPDSLAKVTYDFDKLVHELFGNSSQVGINLPTGECSIFGYFVDIEQCEFIPWSDLVPNDQTLIQRDNPTKKPEVRTNKKLLKNNDHKGVVVSTINFSTNVTAAKTKEMILKKLIRRTKDTLGAPKNNRILIFIDDMNMPVSDMYGAQPPLELIRQLLDLGGVYDTEKNTWKNIQDLSIVAACVPVVNDISPRLLKHFSMLVLPHPSQDILCTIFQIGIDGCGKKTCATLACYLTDNKLYRVPISHKCAYIEFKEVFKKVFIHAGLKGKPTVLMVPNLNIEQDSFLEDLNYIISSGRIPDLFENVELDSIAMKIRYLTEQSGHMDNRQSLLSFFQKRIYKNLHIFVIMSPEGPSFRQNCRVYPSMISSCTIDWYERWPEEALLIVANSFLKEKVNFENRENLKEKLAPTCVQIHKSMKDLNRKYFEETGRFYYTTPNSYLQFMETFAHILRAREEEMQTKRDRFHMGLSTILEATTLVTEMQEELLILGPQVEQKTKETETLMEKLRKDSQVVEKVQMLVKQDEEIVAEEVRIVEDYAQKTANELKSVLPAFDKAIVALNALDKADVAELRVYTRPPFLVLTVMNAVCILLQKKPNWATAKLLLSETGFLKKLINLDKDSIPDKVFVKLKKIVTLPDFNPHKISLVSVACCSLCQWVIALNNYHEVQKVVGPKQIQVAEAQNVLKIARQRLAEKQRGLQLISRWHNQGLPHGQYSVENAILIKNGQQWPLLIDPHRQAHKWIRQMEGSRLQKLSIEDSNYTKKIENAMKTGGSVLLQSCQASTWRKKLYLSTEIDNPHFLPSVYNFVTMINFTVTFQGLQDQLLSTVVTHEVPHLEDQRSKLLESISLDAITLEELEEKTLNLLQKALGSILDDDKIVDTLRKSKMTSNEISKRIEATKKAESEIQAIRKNYLPIATRGALLYFLVADLTQINYMYQFSLDWFHQVFVSSVVSKSKEQEHSFKREKVSPKEVHEFISISKEPNLENEKNLLDKHIKSAIDMLTKSIFKVVSSALFNEDKLCFSFRLCTVIMQNNANGNLIQDDIGFLPEEEWNIFLYSGILINIKSALSQSRLTSTFEIGESQHLQWLSDSRWRQCQYVSTHLEPFSLLCKSLLSNVSQWDTFKNSKAVYSLISTPFSSENASLEENTKPPEEKHTFCLLLRAINHTGTDLGPVGRGQWLTSTACDRHTDVCSFSFALNDGVPDVEHVQDIFYGHCVDKYHVKVLRPESLNNSVRKFITEKMGNKYLQRTGVNLKDAYKGSNARTPLILIQTHGSASIKDYIHIIQSLPDDDLPEVLGIHPEAIRSCWETQGEKFIENLIAMQPKTTTANLMIRPEQSKDELVMEILSDLLKRLPLTVEKEEIAVGTPSTLKSMMSSSIWESLSKNLKDHDPLIHCVLLTFLKQEIKRFDKLLFVIHKSLKDLQLAIKGEIILTQELEEIFNSFLNMRVPTLWQKHAYRSCKPLSSWIDDLIQRLNFFNTWAKVAYTAIQRRYMRFVTVWKQSIPSTSQKCKHPEDSENNFFEGFPSRYWLPAFFFPQAFLAAVLQDYGRSRGIAVDALTFTHHVISNTTDKDEKFSVFMPKKLNIVRRAFKGSASSHTGVYIFGLFIEGARWNREQKILEDSLPLEMCCDFPDIYFLPTKISTKTPNASNQTDSELYAFECPVYQTPERSRILATTGLPTNFLTSVYLSTKKPPSHWITMRVALLCEKNEK.

Residues 91 to 126 form a disordered region; that stretch reads PHLPGTQDPLRRVRDPTPIVASSPGRRRGSWSGGYG. The stretch at 354 to 381 forms a coiled coil; that stretch reads DEFCEEQLQQATQALKQLEDIRNKAISE. Positions 1164–1171 match the GPAGTGKT motif motif; the sequence is GPAGTGKT. Residues 1164-1171 and 1427-1434 each bind ATP; these read GPAGTGKT and GPTGGGKT. N1818 is a glycosylation site (N-linked (GlcNAc...) asparagine).

It belongs to the dynein heavy chain family. Consists of at least two heavy chains and a number of intermediate and light chains.

Its subcellular location is the cytoplasm. The protein resides in the cytoskeleton. It localises to the cilium axoneme. In terms of biological role, force generating protein of respiratory cilia. Produces force towards the minus ends of microtubules. Dynein has ATPase activity; the force-producing power stroke is thought to occur on release of ADP. Involved in sperm motility; implicated in sperm flagellar assembly. This Homo sapiens (Human) protein is Dynein axonemal heavy chain 14 (DNAH14).